Reading from the N-terminus, the 444-residue chain is MAFRCQRDSYAREFTTTVVSCRPAELHTEESNGKKEVLSGFQVVLEDTLLFPEGGGQPDDRGTINDISVLRVTRRGTQADHFTQTPLTPGTEVQVRVDWERRFDHMQQHSGQHLITAVADDLFGLKTTSWELGRLRSVIELDSPTVTAEQVAAIERSVNEKIRDRLPVNVRELSLDDPEVEQVRGRGLPDDHAGPIRVVTIESVDSNMCCGTHVSNLSDLQVIKILGTEKGKKNKTNLIFLAGNRVLKWMERSHGIEKALTALLKCGAEDHVEAVKKLQNSSKLLQKNNLNLLRDLAVHIAHSLRNSPDWGGVITLHRKGGGEASWRSWAACNFPAPFAAWSQVCALCFRKDGDSEFMNIIANEIGSEETLLFLTVGDEKGAGLFLLAGPAEAVETLGPRVSEVLEGKGAGKKGRFQGKATKMSRRAEVQALLQDYISTQSAEE.

Zn(2+) contacts are provided by histidine 109 and histidine 113. The residue at position 174 (serine 174) is a Phosphoserine. Residues cysteine 209 and histidine 213 each contribute to the Zn(2+) site.

Belongs to the class-II aminoacyl-tRNA synthetase family. Alax-L subfamily. Zn(2+) is required as a cofactor.

Its subcellular location is the cytoplasm. In terms of biological role, functions in trans to edit the amino acid moiety from incorrectly charged tRNA(Ala). The protein is Alanyl-tRNA editing protein Aarsd1 (AARSD1) of Bos taurus (Bovine).